Reading from the N-terminus, the 419-residue chain is UDP-N-acetylglucosamine 1-carboxyvinyltransferase (419 aa).

Residue 22–23 participates in phosphoenolpyruvate binding; the sequence is KN. Residue R93 participates in UDP-N-acetyl-alpha-D-glucosamine binding. C117 (proton donor) is an active-site residue. Residue C117 is modified to 2-(S-cysteinyl)pyruvic acid O-phosphothioketal. UDP-N-acetyl-alpha-D-glucosamine-binding positions include 122–126, D305, and I327; that span reads RPVDQ.

This sequence belongs to the EPSP synthase family. MurA subfamily.

It localises to the cytoplasm. The catalysed reaction is phosphoenolpyruvate + UDP-N-acetyl-alpha-D-glucosamine = UDP-N-acetyl-3-O-(1-carboxyvinyl)-alpha-D-glucosamine + phosphate. The protein operates within cell wall biogenesis; peptidoglycan biosynthesis. Its function is as follows. Cell wall formation. Adds enolpyruvyl to UDP-N-acetylglucosamine. The sequence is that of UDP-N-acetylglucosamine 1-carboxyvinyltransferase from Dichelobacter nodosus (strain VCS1703A).